Reading from the N-terminus, the 468-residue chain is MSYTFDWLSKDVVKKLQGRDLRPVKCLSDATKFCLFNILQETSSRLALKTEYIPVGFTLLHLLEPNIPVPEPEVSAPIPLKHTISQKLKADLDVETIAGGEAGFVKSCGYDIEVQSKSIPNPKLESLQNRKLLDQLPTFMKTCWKDGKNLYVVTEAYEVTKDTVLEGTSNSKFAIKGIINQLVKVGGSGQWQTEKTDSIPIQKGSVLAYKKQQLVIEDNTCVILTSANTKKKMTFPMRFVGMSGHLRYQDLVIETGSWINDIDPIGTIKEPTHLDFMCLQNEVSEQTRLLAELSKDVQEVVFSSFLHMLCDRDVLYDLMKMLELNQLGHMDGPGGKILDELRKDSSLSWINLKDLILYLLQALMVLSDTQLCLLALSVEMRLLPHQVELVKSILQPNFKYPWNIPFTLQPQLLAPLQGEGLAITYELLEECGLKMELNNPRSTWDLEAKMPLSALYGSLSFLQQLSEA.

The triggers pyroptosis stretch occupies residues 1 to 230; the sequence is MSYTFDWLSK…CVILTSANTK (230 aa).

It belongs to the gasdermin family. In terms of assembly, homooligomer; homooligomeric ring-shaped pore complex containing 27-28 subunits when inserted in the membrane. In terms of processing, cleavage by CASP8 relieves autoinhibition by releasing the N-terminal moiety (Gasdermin-C, N-terminal) that initiates pyroptosis. Palmitoylated.

The protein localises to the cytoplasm. The protein resides in the cytosol. It is found in the cell membrane. Its activity is regulated as follows. The full-length protein before cleavage is inactive: intramolecular interactions between N- and C-terminal domains mediate autoinhibition in the absence of activation signal. The intrinsic pyroptosis-inducing activity is carried by the released N-terminal moiety (Gasdermin-C, N-terminal) following cleavage by caspase CASP8. This form constitutes the precursor of the pore-forming protein: upon cleavage, the released N-terminal moiety (Gasdermin-C, N-terminal) binds to membranes and forms pores, triggering pyroptosis. Its function is as follows. Pore-forming protein that causes membrane permeabilization and pyroptosis. Produced by the cleavage of gasdermin-C by caspase CASP8 in response to death signals. After cleavage, moves to the plasma membrane where it strongly binds to membrane inner leaflet lipids. Homooligomerizes within the membrane and forms pores of 10-15 nanometers (nm) of inner diameter, triggering pyroptosis. In Mus musculus (Mouse), this protein is Gasdermin-C.